The chain runs to 236 residues: tRNA (guanine-N(1)-)-methyltransferase (236 aa).

S-adenosyl-L-methionine-binding positions include glycine 110 and 129–134 (LGDFVL).

Belongs to the RNA methyltransferase TrmD family. In terms of assembly, homodimer.

It localises to the cytoplasm. The catalysed reaction is guanosine(37) in tRNA + S-adenosyl-L-methionine = N(1)-methylguanosine(37) in tRNA + S-adenosyl-L-homocysteine + H(+). In terms of biological role, specifically methylates guanosine-37 in various tRNAs. This chain is tRNA (guanine-N(1)-)-methyltransferase, found in Clostridium perfringens (strain ATCC 13124 / DSM 756 / JCM 1290 / NCIMB 6125 / NCTC 8237 / Type A).